The chain runs to 190 residues: Potassium-transporting ATPase KdpC subunit (190 aa).

Residues 10 to 30 (TFLFLLLITGGVYPLLTTALG) form a helical membrane-spanning segment.

Belongs to the KdpC family. The system is composed of three essential subunits: KdpA, KdpB and KdpC.

It localises to the cell inner membrane. Functionally, part of the high-affinity ATP-driven potassium transport (or Kdp) system, which catalyzes the hydrolysis of ATP coupled with the electrogenic transport of potassium into the cytoplasm. This subunit acts as a catalytic chaperone that increases the ATP-binding affinity of the ATP-hydrolyzing subunit KdpB by the formation of a transient KdpB/KdpC/ATP ternary complex. The protein is Potassium-transporting ATPase KdpC subunit of Escherichia fergusonii (strain ATCC 35469 / DSM 13698 / CCUG 18766 / IAM 14443 / JCM 21226 / LMG 7866 / NBRC 102419 / NCTC 12128 / CDC 0568-73).